Here is a 577-residue protein sequence, read N- to C-terminus: MSDGKSVEKEEALSVNEHLKTDSDFLRGTIQEGLDTAVTGSFSEGDQQLIKFHGFYQQDDRDLRNERKEQKLEPLYSFMLRARVAGGVCSPEQWLGVDEISSTLTSSNSIRLTTRQTFQYHGISKRNLRTLIQGLDSKALDSIAACGDVNRNVMCNPNPVESRLHEQAYYWAKQLSDQYLPRTKAYAEIWLGDDKVATSEGDDVEPVYGKTYLPRKFKMAVAVPPDNDVDVYTNDLGFVAVAEEGELVGFNLVAGGGMGSTHGEVQTFPRLADDFGFIKAEDTLKFAEAVLKVQRDWGNRSNRKLSRLKYTIVKYGYEAFKAEVEKRAGVKFEPKRDVVIGDRGDRYGWIKGVDNKWHLTLFIEGGRIKDLPGQPLQTGLREIAKIHKGDFRMTSNQNFIIASVAEEDKAEIEALARSHGLMGKLITETRGRSIACVALPTCALAMAEAERYFPDFLSKVESLQEKHGFLDQGIVIRMTGCPNGCARPFAAEIGLVGKAPGRYNLYLGASFEGTRLNKLYRENIQEAEILSELDSLFARYVAEREEGETFGNFTVRIGAVSAVIDAAKDFHEQHNHA.

[4Fe-4S] cluster is bound by residues cysteine 436, cysteine 442, cysteine 481, and cysteine 485. Cysteine 485 contacts siroheme.

The protein belongs to the nitrite and sulfite reductase 4Fe-4S domain family. Alpha(8)-beta(8). The alpha component is a flavoprotein, the beta component is a hemoprotein. Requires siroheme as cofactor. It depends on [4Fe-4S] cluster as a cofactor.

It carries out the reaction hydrogen sulfide + 3 NADP(+) + 3 H2O = sulfite + 3 NADPH + 4 H(+). It functions in the pathway sulfur metabolism; hydrogen sulfide biosynthesis; hydrogen sulfide from sulfite (NADPH route): step 1/1. In terms of biological role, component of the sulfite reductase complex that catalyzes the 6-electron reduction of sulfite to sulfide. This is one of several activities required for the biosynthesis of L-cysteine from sulfate. In Shewanella woodyi (strain ATCC 51908 / MS32), this protein is Sulfite reductase [NADPH] hemoprotein beta-component.